Here is a 185-residue protein sequence, read N- to C-terminus: MKFNIPIFLTIFRVILIPFFVIAFYLPIESSPFITTLIFFIAGVTDWLDGYLARKWKQTTRFGAFLDPVADKVMVVAALVLIVEHQHTFWITIPAIIMISREIIISALREWMAELGERSKIAVSWWGKWKTTAQMLALGGLLWRYNNYMEIAAIILLYIAAILTIWSMIQYLQVAKGSLLDNIQL.

The next 4 membrane-spanning stretches (helical) occupy residues 7-26, 33-52, 89-108, and 151-172; these read IFLT…AFYL, FITT…DGYL, FWIT…ISAL, and IAAI…IQYL.

This sequence belongs to the CDP-alcohol phosphatidyltransferase class-I family.

The protein localises to the cell membrane. The enzyme catalyses a CDP-1,2-diacyl-sn-glycerol + sn-glycerol 3-phosphate = a 1,2-diacyl-sn-glycero-3-phospho-(1'-sn-glycero-3'-phosphate) + CMP + H(+). It participates in phospholipid metabolism; phosphatidylglycerol biosynthesis; phosphatidylglycerol from CDP-diacylglycerol: step 1/2. This protein catalyzes the committed step to the synthesis of the acidic phospholipids. This Haemophilus influenzae (strain ATCC 51907 / DSM 11121 / KW20 / Rd) protein is CDP-diacylglycerol--glycerol-3-phosphate 3-phosphatidyltransferase (pgsA).